Consider the following 250-residue polypeptide: Coproheme decarboxylase (250 aa).

Residues R131, 145–149 (YPMNK), H172, and Q185 contribute to the Fe-coproporphyrin III site. Y145 is an active-site residue.

The protein belongs to the ChdC family. Type 1 subfamily. It depends on Fe-coproporphyrin III as a cofactor.

It carries out the reaction Fe-coproporphyrin III + 2 H2O2 + 2 H(+) = heme b + 2 CO2 + 4 H2O. The enzyme catalyses Fe-coproporphyrin III + H2O2 + H(+) = harderoheme III + CO2 + 2 H2O. It catalyses the reaction harderoheme III + H2O2 + H(+) = heme b + CO2 + 2 H2O. The protein operates within porphyrin-containing compound metabolism; protoheme biosynthesis. In terms of biological role, involved in coproporphyrin-dependent heme b biosynthesis. Catalyzes the decarboxylation of Fe-coproporphyrin III (coproheme) to heme b (protoheme IX), the last step of the pathway. The reaction occurs in a stepwise manner with a three-propionate intermediate. This is Coproheme decarboxylase from Staphylococcus aureus (strain USA300 / TCH1516).